We begin with the raw amino-acid sequence, 274 residues long: 2,3,4,5-tetrahydropyridine-2,6-dicarboxylate N-succinyltransferase (274 aa).

Substrate contacts are provided by arginine 103 and aspartate 140.

Belongs to the transferase hexapeptide repeat family. Homotrimer.

It is found in the cytoplasm. It catalyses the reaction (S)-2,3,4,5-tetrahydrodipicolinate + succinyl-CoA + H2O = (S)-2-succinylamino-6-oxoheptanedioate + CoA. Its pathway is amino-acid biosynthesis; L-lysine biosynthesis via DAP pathway; LL-2,6-diaminopimelate from (S)-tetrahydrodipicolinate (succinylase route): step 1/3. This is 2,3,4,5-tetrahydropyridine-2,6-dicarboxylate N-succinyltransferase from Actinobacillus pleuropneumoniae serotype 5b (strain L20).